The chain runs to 226 residues: Triosephosphate isomerase (226 aa).

13–15 serves as a coordination point for substrate; the sequence is NFK. The active-site Electrophile is H97. E145 acts as the Proton acceptor in catalysis. Residues I150, G185, and 206-207 each bind substrate; that span reads AS.

Belongs to the triosephosphate isomerase family. As to quaternary structure, homotetramer; dimer of dimers.

The protein resides in the cytoplasm. It catalyses the reaction D-glyceraldehyde 3-phosphate = dihydroxyacetone phosphate. It participates in carbohydrate biosynthesis; gluconeogenesis. It functions in the pathway carbohydrate degradation; glycolysis; D-glyceraldehyde 3-phosphate from glycerone phosphate: step 1/1. Functionally, involved in the gluconeogenesis. Catalyzes stereospecifically the conversion of dihydroxyacetone phosphate (DHAP) to D-glyceraldehyde-3-phosphate (G3P). The sequence is that of Triosephosphate isomerase from Methanobacterium bryantii.